The sequence spans 180 residues: Translation initiation factor IF-3 (180 aa).

This sequence belongs to the IF-3 family. In terms of assembly, monomer.

It is found in the cytoplasm. In terms of biological role, IF-3 binds to the 30S ribosomal subunit and shifts the equilibrium between 70S ribosomes and their 50S and 30S subunits in favor of the free subunits, thus enhancing the availability of 30S subunits on which protein synthesis initiation begins. The chain is Translation initiation factor IF-3 from Hyphomonas neptunium (strain ATCC 15444).